A 350-amino-acid polypeptide reads, in one-letter code: D-guloside 3-dehydrogenase (350 aa).

It belongs to the zinc-containing alcohol dehydrogenase family. It depends on Zn(2+) as a cofactor.

It carries out the reaction a D-guloside + NAD(+) = a 3-dehydro-D-guloside + NADH + H(+). Functionally, catalyzes the NAD(+)-dependent oxidation of the hydroxyl group at C3 of D-gulosides leading to 3-dehydro-D-gulosides. Probably functions in a metabolic pathway that transforms D-gulosides to D-glucosides. Is also able to catalyze the reverse reactions, i.e. the NADH-dependent reduction of the oxo group at C3 of 3-dehydro-D-gulosides leading to D-gulosides. In vitro, can oxidize D-gulose and methyl beta-D-guloside, and reduce methyl alpha-3-dehydro-D-guloside and methyl beta-3-dehydro-D-guloside. However, the actual specific physiological substrates for this metabolic pathway are unknown. This is D-guloside 3-dehydrogenase (ycjQ) from Escherichia coli (strain K12).